The chain runs to 1604 residues: Ubiquitin carboxyl-terminal hydrolase 32 (1604 aa).

3 EF-hand domains span residues 91–126 (KDEE…VDGK), 228–263 (IRPS…CCRG), and 264–299 (PLAE…LLEV). Ca(2+) contacts are provided by aspartate 241, asparagine 243, aspartate 245, histidine 247, glutamate 252, aspartate 277, aspartate 279, aspartate 281, and glutamate 288. The DUSP domain occupies 369–585 (ATPEEEGQII…ANLALPRPVI (217 aa)). The USP domain maps to 734–1567 (TGLSNLGNTC…SAYILFYEQQ (834 aa)). Cysteine 743 acts as the Nucleophile in catalysis. Tyrosine 1173 carries the phosphotyrosine modification. Disordered regions lie at residues 1343–1362 (KKVD…SKSP) and 1367–1431 (ANII…DASK). 4 positions are modified to phosphoserine: serine 1350, serine 1372, serine 1376, and serine 1454. Residues 1367–1399 (ANIISSPKGSPSSSRKSGTSCPSSKNSSPNSSP) are compositionally biased toward low complexity. Catalysis depends on histidine 1526, which acts as the Proton acceptor. Position 1588 is a phosphoserine (serine 1588). Cysteine 1601 carries the cysteine methyl ester modification. A lipid anchor (S-farnesyl cysteine) is attached at cysteine 1601. The propeptide at 1602 to 1604 (VLQ) is removed in mature form.

The protein belongs to the peptidase C19 family.

It is found in the golgi apparatus membrane. The catalysed reaction is Thiol-dependent hydrolysis of ester, thioester, amide, peptide and isopeptide bonds formed by the C-terminal Gly of ubiquitin (a 76-residue protein attached to proteins as an intracellular targeting signal).. Its function is as follows. Deubiquitinase that can remove conjugated ubiquitin from target proteins, such as RAB7A and LAMTOR1. Acts as a positive regulator of the mTORC1 signaling by mediating deubiquitination of LAMTOR1, thereby promoting the association between LAMTOR1 and the lysosomal V-ATPase complex and subsequent activation of the mTORC1 complex. The chain is Ubiquitin carboxyl-terminal hydrolase 32 (USP32) from Homo sapiens (Human).